Consider the following 242-residue polypeptide: Uridylate kinase (242 aa).

An ATP-binding site is contributed by 8 to 11 (KFSG). Residue Gly50 participates in UMP binding. ATP is bound by residues Gly51 and Arg55. Residues Asp71 and 132-139 (TGNPFFTT) each bind UMP. 3 residues coordinate ATP: Thr159, Tyr165, and Asp168.

It belongs to the UMP kinase family. As to quaternary structure, homohexamer.

The protein resides in the cytoplasm. The catalysed reaction is UMP + ATP = UDP + ADP. Its pathway is pyrimidine metabolism; CTP biosynthesis via de novo pathway; UDP from UMP (UMPK route): step 1/1. Inhibited by UTP. Functionally, catalyzes the reversible phosphorylation of UMP to UDP. The protein is Uridylate kinase of Nitratiruptor sp. (strain SB155-2).